The chain runs to 186 residues: Elongation factor P (186 aa).

This sequence belongs to the elongation factor P family.

The protein resides in the cytoplasm. The protein operates within protein biosynthesis; polypeptide chain elongation. Its function is as follows. Involved in peptide bond synthesis. Stimulates efficient translation and peptide-bond synthesis on native or reconstituted 70S ribosomes in vitro. Probably functions indirectly by altering the affinity of the ribosome for aminoacyl-tRNA, thus increasing their reactivity as acceptors for peptidyl transferase. The sequence is that of Elongation factor P from Prochlorococcus marinus (strain MIT 9313).